Here is a 315-residue protein sequence, read N- to C-terminus: tRNA-dihydrouridine(16) synthase (315 aa).

Residues 7–9 and Gln68 each bind FMN; that span reads PME. Cys98 functions as the Proton donor in the catalytic mechanism. FMN-binding positions include Lys139, 199-201, and 223-224; these read NGE and GR.

Belongs to the Dus family. DusC subfamily. FMN serves as cofactor.

It catalyses the reaction 5,6-dihydrouridine(16) in tRNA + NADP(+) = uridine(16) in tRNA + NADPH + H(+). The enzyme catalyses 5,6-dihydrouridine(16) in tRNA + NAD(+) = uridine(16) in tRNA + NADH + H(+). In terms of biological role, catalyzes the synthesis of 5,6-dihydrouridine (D), a modified base found in the D-loop of most tRNAs, via the reduction of the C5-C6 double bond in target uridines. Specifically modifies U16 in tRNAs. In Aquipseudomonas alcaligenes (Pseudomonas alcaligenes), this protein is tRNA-dihydrouridine(16) synthase.